Reading from the N-terminus, the 579-residue chain is XK-related protein 7 (579 aa).

A compositionally biased stretch (low complexity) spans methionine 1 to glycine 18. The tract at residues methionine 1–proline 40 is disordered. Over residues alanine 19–glycine 31 the composition is skewed to gly residues. The next 2 helical transmembrane spans lie at tryptophan 59–alanine 79 and tyrosine 89–phenylalanine 109. The interval glycine 146–serine 165 is disordered. Helical transmembrane passes span leucine 260–tyrosine 280, glycine 314–glycine 334, glycine 355–valine 375, methionine 384–serine 404, and leucine 415–tyrosine 435. Residues alanine 466–threonine 510 are disordered.

It belongs to the XK family.

The protein localises to the cell membrane. The chain is XK-related protein 7 (XKR7) from Pan troglodytes (Chimpanzee).